Consider the following 236-residue polypeptide: Virion protein US10 homolog (236 aa).

Residues 1–32 are disordered; the sequence is MDGAYGHVHNGSPMAVDGEESGAGTGTGAGAD. Residues 21 to 31 show a composition bias toward gly residues; the sequence is SGAGTGTGAGA. A zinc finger lies at 138 to 150; it reads CAYWCCLGHAFAC.

This sequence belongs to the herpesviridae US10 family. Post-translationally, phosphorylated.

The protein resides in the virion tegument. It localises to the host nucleus matrix. The polypeptide is Virion protein US10 homolog (IR5) (Equine herpesvirus 1 (strain Kentucky A) (EHV-1)).